A 226-amino-acid polypeptide reads, in one-letter code: Leucyl/phenylalanyl-tRNA--protein transferase (226 aa).

This sequence belongs to the L/F-transferase family.

The protein localises to the cytoplasm. The enzyme catalyses N-terminal L-lysyl-[protein] + L-leucyl-tRNA(Leu) = N-terminal L-leucyl-L-lysyl-[protein] + tRNA(Leu) + H(+). The catalysed reaction is N-terminal L-arginyl-[protein] + L-leucyl-tRNA(Leu) = N-terminal L-leucyl-L-arginyl-[protein] + tRNA(Leu) + H(+). It carries out the reaction L-phenylalanyl-tRNA(Phe) + an N-terminal L-alpha-aminoacyl-[protein] = an N-terminal L-phenylalanyl-L-alpha-aminoacyl-[protein] + tRNA(Phe). Functionally, functions in the N-end rule pathway of protein degradation where it conjugates Leu, Phe and, less efficiently, Met from aminoacyl-tRNAs to the N-termini of proteins containing an N-terminal arginine or lysine. The polypeptide is Leucyl/phenylalanyl-tRNA--protein transferase (Ectopseudomonas mendocina (strain ymp) (Pseudomonas mendocina)).